We begin with the raw amino-acid sequence, 1134 residues long: Early transcription factor large subunit homolog (1134 aa).

Residues 52 to 352 (KGGRAFFPCD…PNGQPLQRQQ (301 aa)) enclose the Helicase ATP-binding domain. 99–106 (WQTGTGKS) contacts ATP. Positions 281-284 (DEIH) match the DEAH box motif. The Helicase C-terminal domain occupies 524–725 (MMKDILSIIR…EGDKALRKHA (202 aa)).

This sequence belongs to the DEAD box helicase family. DEAH subfamily.

The protein localises to the virion. It catalyses the reaction ATP + H2O = ADP + phosphate + H(+). Putative initation factor. This chain is Early transcription factor large subunit homolog, found in African swine fever virus (isolate Pig/Kenya/KEN-50/1950) (ASFV).